The following is a 394-amino-acid chain: Argininosuccinate synthase (394 aa).

Residues alanine 7–serine 15 and alanine 34 contribute to the ATP site. Residues tyrosine 85 and serine 90 each coordinate L-citrulline. Glycine 115 is an ATP binding site. Threonine 117, asparagine 121, and aspartate 122 together coordinate L-aspartate. Asparagine 121 lines the L-citrulline pocket. L-citrulline-binding residues include arginine 125, serine 176, serine 185, glutamate 261, and tyrosine 273.

Belongs to the argininosuccinate synthase family. Type 1 subfamily. As to quaternary structure, homotetramer.

Its subcellular location is the cytoplasm. It catalyses the reaction L-citrulline + L-aspartate + ATP = 2-(N(omega)-L-arginino)succinate + AMP + diphosphate + H(+). It participates in amino-acid biosynthesis; L-arginine biosynthesis; L-arginine from L-ornithine and carbamoyl phosphate: step 2/3. The chain is Argininosuccinate synthase from Ehrlichia ruminantium (strain Welgevonden).